Consider the following 284-residue polypeptide: Probable 3-mercaptopyruvate sulfurtransferase (284 aa).

Rhodanese domains are found at residues 17–138 (SEPD…ALTN) and 168–281 (GQPG…RPVA). A substrate-binding site is contributed by Arg-182. Cys-241 serves as the catalytic Cysteine persulfide intermediate. Residues 241-247 (CGSGVTA) form a substrate specificity region.

It localises to the cytoplasm. The enzyme catalyses 2-oxo-3-sulfanylpropanoate + [thioredoxin]-dithiol = [thioredoxin]-disulfide + hydrogen sulfide + pyruvate + H(+). Its function is as follows. Catalyzes the transfer of sulfur from 3-mercaptopyruvate to a thiol-containing acceptor to form an intramolecular disulfide releasing hydrogen sulfide and pyruvate. The protein is Probable 3-mercaptopyruvate sulfurtransferase (sseA) of Pseudomonas aeruginosa (strain ATCC 15692 / DSM 22644 / CIP 104116 / JCM 14847 / LMG 12228 / 1C / PRS 101 / PAO1).